The chain runs to 275 residues: MNYNQPATLQAAILDWAGTVVDFGSFAPTQIFVEAFAEFGVQVSLEEARGPMGMGKWDHIRTLCDIPAIAERYRVAFGRLPTDDDVTAIYERFMPLQIEKIAEHSALIPGALQAIAELRGMGLKIGSCSGYPAVVMEKVVALAETNGYVADHVVATDEVPNGRPWPAQALANVIALGIDDVAACVKVDDTWPGILEGRRAGMWTVALTCSGNALGLTYEQYKGLPAAELERERTRIEQMFEGARPHYLVETIAELPAVVRDINARLARGEMPQGN.

The active-site Nucleophile is the D15. Mg(2+) contacts are provided by D15 and A17. The Schiff-base intermediate with substrate role is filled by K56. D189 serves as a coordination point for Mg(2+).

It belongs to the HAD-like hydrolase superfamily. PhnX family. In terms of assembly, homodimer. The cofactor is Mg(2+).

The enzyme catalyses phosphonoacetaldehyde + H2O = acetaldehyde + phosphate + H(+). Functionally, involved in phosphonate degradation. In Pseudomonas paraeruginosa (strain DSM 24068 / PA7) (Pseudomonas aeruginosa (strain PA7)), this protein is Phosphonoacetaldehyde hydrolase.